A 344-amino-acid chain; its full sequence is Adenosine kinase (344 aa).

D298 is an active-site residue.

This sequence belongs to the carbohydrate kinase PfkB family. Mg(2+) is required as a cofactor.

The catalysed reaction is adenosine + ATP = AMP + ADP + H(+). Its pathway is purine metabolism; AMP biosynthesis via salvage pathway; AMP from adenosine: step 1/1. In Schizophyllum commune (Split gill fungus), this protein is Adenosine kinase (ADK).